A 1630-amino-acid chain; its full sequence is Probable phosphoinositide phosphatase SAC9 (1630 aa).

Positions 147–527 (LTELDIDGKH…ADAVTGKSYY (381 aa)) constitute an SAC domain. The short motif at 456-467 (RFNCADSLDRTN) is the Phosphatase catalytic core; degenerate element. The WW domain occupies 508–542 (APLPPGWEKRADAVTGKSYYIDHNTKTTTWSHPCP).

In terms of tissue distribution, ubiquitous. Most abundant in the roots with lower expression levels throughout the leaves and shoot.

Its function is as follows. Probable phosphoinositide phosphatase that could be involved in stress signaling. The chain is Probable phosphoinositide phosphatase SAC9 (SAC9) from Arabidopsis thaliana (Mouse-ear cress).